A 161-amino-acid chain; its full sequence is Effector CFEM5 (161 aa).

Residues 1–23 (MFSLTKSVLFTSIVAIAAQATTA) form the signal peptide. The CFEM domain maps to 24-126 (VSSPTQTSLP…KVLDAVVASA (103 aa)). 3 disulfides stabilise this stretch: Cys-46–Cys-78, Cys-56–Cys-63, and Cys-65–Cys-100. Asp-60 lines the heme pocket.

The protein belongs to the RBT5 family. In terms of assembly, interacts with Z.mays LRR5; the interaction is direct. Interacts with Z.mays WAK17 isoform 2; the interaction is direct.

It localises to the membrane. The protein localises to the secreted. Functionally, suppresses host programmed cell death during infection by binding to Z.mays WAK17 isoform 2 and Z.mays LRR5, to prevent activation of Z.mays WAK17 isoform 1 and the downstream hypersensitive response. The chain is Effector CFEM5 from Gibberella zeae (strain ATCC MYA-4620 / CBS 123657 / FGSC 9075 / NRRL 31084 / PH-1) (Wheat head blight fungus).